The chain runs to 484 residues: Calcium-dependent protein kinase 31 (484 aa).

The N-myristoyl glycine moiety is linked to residue Gly2. The Protein kinase domain maps to 28–290 (YILGDELGQG…AAEVLGHPWM (263 aa)). Residues 34-42 (LGQGQFGIT) and Lys57 contribute to the ATP site. The active-site Proton acceptor is Asp156. Ser196 is subject to Phosphoserine. Residues 295–325 (ASDKPIDGVVLSRLKQFRDMNKLKKVALKVI) are autoinhibitory domain. 4 consecutive EF-hand domains span residues 332–367 (EEIK…LGSN), 368–403 (LSKT…RYRL), 404–439 (DRDD…HGVG), and 444–474 (IKQI…GSSL). Ca(2+)-binding residues include Asp345, Asp347, Ser349, Thr351, Glu356, Asp381, Asp383, Asn385, Thr387, Glu392, Asp417, Asp419, Asp421, His423, Glu428, Asp452, Asp454, Asp456, Lys458, and Glu463.

The protein belongs to the protein kinase superfamily. Ser/Thr protein kinase family. CDPK subfamily.

It localises to the membrane. The catalysed reaction is L-seryl-[protein] + ATP = O-phospho-L-seryl-[protein] + ADP + H(+). The enzyme catalyses L-threonyl-[protein] + ATP = O-phospho-L-threonyl-[protein] + ADP + H(+). With respect to regulation, activated by calcium. Autophosphorylation may play an important role in the regulation of the kinase activity. May play a role in signal transduction pathways that involve calcium as a second messenger. The chain is Calcium-dependent protein kinase 31 (CPK31) from Arabidopsis thaliana (Mouse-ear cress).